A 349-amino-acid polypeptide reads, in one-letter code: Fructose-1,6-bisphosphatase class 1 (349 aa).

4 residues coordinate Mg(2+): Glu-91, Asp-110, Leu-112, and Asp-113. Substrate is bound by residues 113 to 116 (DGSS) and Asn-205. Glu-277 is a Mg(2+) binding site.

It belongs to the FBPase class 1 family. Homotetramer. Mg(2+) serves as cofactor.

The protein localises to the cytoplasm. It carries out the reaction beta-D-fructose 1,6-bisphosphate + H2O = beta-D-fructose 6-phosphate + phosphate. It participates in carbohydrate biosynthesis; gluconeogenesis. The polypeptide is Fructose-1,6-bisphosphatase class 1 (Sinorhizobium medicae (strain WSM419) (Ensifer medicae)).